Here is a 464-residue protein sequence, read N- to C-terminus: MYYIGHPSYYRKHIEHVCFQHSGILKKRNYQKNQKKYIMKLNESAMKNAEKKSNSYLAIRMTRSGYNYFKGICVCTFLLSTILYLGIAVIMSHLCVFDDTAMLYLRQNRSRLAESNIFRTLFISWIRWDAIYFVDMAVNGSLFEQEWAFSSLWPKIISFLAFRSKDVVLLGIVSCFASIFFHAIACYALYLLTKSIFSNQKMTAYTVIFYCFSPSGIYMSVGYTESLFAAFSFLGLLLFIKKQQYPAAFLWSLATLIRSNGIFWCIFFGMPAIGTLKISLERLQLTFMQVSQLVGYGTKCLIILVPFFYNQYLGFKLFCPGVAWCNKSLPLIYPAVQEKYWNVGFLRYWTLNNIPNFLFALLSIIPILFALFYSISGSTLHSFRSIKSHLVLSALYLYIGCFHMHTQVLNRMSSALPLLYWSMAHATLYAKSRNLKAFGHCILFVWIVYTVIQAGLYGSFLPPA.

At 1-70 (MYYIGHPSYY…MTRSGYNYFK (70 aa)) the chain is on the cytoplasmic side. A helical membrane pass occupies residues 71–91 (GICVCTFLLSTILYLGIAVIM). Residues 92–166 (SHLCVFDDTA…ISFLAFRSKD (75 aa)) lie on the Lumenal side of the membrane. 2 N-linked (GlcNAc...) asparagine glycosylation sites follow: Asn-108 and Asn-139. A helical transmembrane segment spans residues 167–187 (VVLLGIVSCFASIFFHAIACY). The Cytoplasmic segment spans residues 188 to 219 (ALYLLTKSIFSNQKMTAYTVIFYCFSPSGIYM). The helical transmembrane segment at 220 to 240 (SVGYTESLFAAFSFLGLLLFI) threads the bilayer. The Lumenal segment spans residues 241-260 (KKQQYPAAFLWSLATLIRSN). The helical transmembrane segment at 261–281 (GIFWCIFFGMPAIGTLKISLE) threads the bilayer. Over 282 to 289 (RLQLTFMQ) the chain is Cytoplasmic. Residues 290–309 (VSQLVGYGTKCLIILVPFFY) form a helical membrane-spanning segment. The Lumenal portion of the chain corresponds to 310–356 (NQYLGFKLFCPGVAWCNKSLPLIYPAVQEKYWNVGFLRYWTLNNIPN). Residue Asn-326 is glycosylated (N-linked (GlcNAc...) asparagine). The helical transmembrane segment at 357 to 377 (FLFALLSIIPILFALFYSISG) threads the bilayer. The Cytoplasmic segment spans residues 378 to 388 (STLHSFRSIKS). A helical membrane pass occupies residues 389 to 409 (HLVLSALYLYIGCFHMHTQVL). At 410-440 (NRMSSALPLLYWSMAHATLYAKSRNLKAFGH) the chain is on the lumenal side. A helical transmembrane segment spans residues 441–461 (CILFVWIVYTVIQAGLYGSFL). Over 462 to 464 (PPA) the chain is Cytoplasmic.

Belongs to the PIGV family. In terms of assembly, part of the GPI mannosyltransferase 2 complex composed of gpi18 and C167.09.

It localises to the endoplasmic reticulum membrane. The protein operates within glycolipid biosynthesis; glycosylphosphatidylinositol-anchor biosynthesis. Mannosyltransferase involved in glycosylphosphatidylinositol-anchor biosynthesis. Responsible for the transfer of the second mannose to the glycosylphosphatidylinositol during GPI precursor assembly. This chain is GPI mannosyltransferase 2 (gpi18), found in Schizosaccharomyces pombe (strain 972 / ATCC 24843) (Fission yeast).